A 258-amino-acid chain; its full sequence is UPF0246 protein Pnec_1068 (258 aa).

The protein belongs to the UPF0246 family.

The chain is UPF0246 protein Pnec_1068 from Polynucleobacter necessarius subsp. necessarius (strain STIR1).